The primary structure comprises 122 residues: MIDRLKKSISKTKRAERSRFKLKKLGSRPRLVFIKSNQYLSCQIIDDIQGVTLAYATTSEKTFTGEGKSKKDKGAAKVLGKLIAERGSQKGVKQVMLDRSGMIFHGRIAAFAEGAREAGLEF.

It belongs to the universal ribosomal protein uL18 family. In terms of assembly, part of the 50S ribosomal subunit; part of the 5S rRNA/L5/L18/L25 subcomplex. Contacts the 5S and 23S rRNAs.

This is one of the proteins that bind and probably mediate the attachment of the 5S RNA into the large ribosomal subunit, where it forms part of the central protuberance. This Leptospira interrogans serogroup Icterohaemorrhagiae serovar copenhageni (strain Fiocruz L1-130) protein is Large ribosomal subunit protein uL18.